A 129-amino-acid polypeptide reads, in one-letter code: Small ribosomal subunit protein uS11c (129 aa).

The protein belongs to the universal ribosomal protein uS11 family. Part of the 30S ribosomal subunit.

It is found in the plastid. It localises to the chloroplast. This chain is Small ribosomal subunit protein uS11c, found in Pleurastrum terricola (Filamentous green alga).